Here is a 755-residue protein sequence, read N- to C-terminus: Photosystem I P700 chlorophyll a apoprotein A1 (755 aa).

Helical transmembrane passes span 72 to 95 (IFSA…YHGA), 158 to 181 (LLCT…FHYH), 197 to 221 (LNHH…HVAI), 297 to 315 (QAHH…GHMY), 352 to 375 (WHAQ…QHMY), 391 to 417 (ISLF…IYMV), 439 to 461 (AIIS…FYVH), and 536 to 554 (FMVH…LILL). [4Fe-4S] cluster contacts are provided by Cys-578 and Cys-587. Transmembrane regions (helical) follow at residues 594–615 (HVFL…HFSW) and 669–691 (LSAY…MFLF). His-680 lines the chlorophyll a' pocket. Chlorophyll a is bound by residues Met-688 and Tyr-696. Trp-697 serves as a coordination point for phylloquinone. A helical membrane pass occupies residues 729-749 (AVGVAHYLLGGIVTTWAFFLA).

Belongs to the PsaA/PsaB family. As to quaternary structure, the PsaA/B heterodimer binds the P700 chlorophyll special pair and subsequent electron acceptors. PSI consists of a core antenna complex that captures photons, and an electron transfer chain that converts photonic excitation into a charge separation. The cyanobacterial PSI reaction center is composed of one copy each of PsaA,B,C,D,E,F,I,J,K,L,M and X, and forms trimeric complexes. PSI electron transfer chain: 5 chlorophyll a, 1 chlorophyll a', 2 phylloquinones and 3 4Fe-4S clusters. PSI core antenna: 90 chlorophyll a, 22 carotenoids, 3 phospholipids and 1 galactolipid. P700 is a chlorophyll a/chlorophyll a' dimer, A0 is one or more chlorophyll a, A1 is one or both phylloquinones and FX is a shared 4Fe-4S iron-sulfur center. serves as cofactor.

It is found in the cellular thylakoid membrane. The catalysed reaction is reduced [plastocyanin] + hnu + oxidized [2Fe-2S]-[ferredoxin] = oxidized [plastocyanin] + reduced [2Fe-2S]-[ferredoxin]. PsaA and PsaB bind P700, the primary electron donor of photosystem I (PSI), as well as the electron acceptors A0, A1 and FX. PSI is a plastocyanin/cytochrome c6-ferredoxin oxidoreductase, converting photonic excitation into a charge separation, which transfers an electron from the donor P700 chlorophyll pair to the spectroscopically characterized acceptors A0, A1, FX, FA and FB in turn. Oxidized P700 is reduced on the lumenal side of the thylakoid membrane by plastocyanin or cytochrome c6. The chain is Photosystem I P700 chlorophyll a apoprotein A1 from Synechococcus sp. (strain JA-3-3Ab) (Cyanobacteria bacterium Yellowstone A-Prime).